A 98-amino-acid polypeptide reads, in one-letter code: uncharacterized protein (98 aa).

The N-terminal stretch at 1-23 (MKKMQSIVLALSLVLVAPMAAQA) is a signal peptide. Residues 68–98 (WHLHGPPPPPRHHKKAPHDHHGGHGPGKHHR) form a disordered region. A compositionally biased stretch (basic residues) spans 77-98 (PRHHKKAPHDHHGGHGPGKHHR).

To E.coli YpeC.

This is an uncharacterized protein from Escherichia coli (strain K12).